The chain runs to 686 residues: Calponin homology and LIM domain-containing protein (686 aa).

Residues 15–120 (ELALDESRDW…ITLYWLGRAA (106 aa)) enclose the Calponin-homology (CH) domain. LIM zinc-binding domains lie at 139 to 200 (MNCS…ATNL) and 219 to 279 (NKCS…SCGK). Residues 305 to 314 (KQVMDKDGHD) are compositionally biased toward basic and acidic residues. Residues 305–345 (KQVMDKDGHDHHHHNHNKPTTTTTTTNSNSPLAKKKSDSCK) are disordered. Residues 322 to 333 (KPTTTTTTTNSN) are compositionally biased toward low complexity. LIM zinc-binding domains are found at residues 373–435 (GTCG…NNKS), 437–495 (KNCH…LNQY), 519–579 (DRCV…IQQS), and 583–658 (DHCA…ASSS).

Interacts with limF and rab21.

Functionally, involved in the regulation of phagocytosis. May repress rab21. In Dictyostelium discoideum (Social amoeba), this protein is Calponin homology and LIM domain-containing protein (ChLim).